Reading from the N-terminus, the 689-residue chain is Beta-galactosidase Pbg (689 aa).

Arg118 contributes to the substrate binding site. Cys122 contributes to the Zn(2+) binding site. Asn156 is a binding site for substrate. Glu157 functions as the Proton donor in the catalytic mechanism. Zn(2+) contacts are provided by Cys162, Cys164, and Cys167. Glu318 serves as the catalytic Nucleophile. Substrate contacts are provided by residues Trp326 and 366-369 (EKFH).

Belongs to the glycosyl hydrolase 42 family.

The enzyme catalyses Hydrolysis of terminal non-reducing beta-D-galactose residues in beta-D-galactosides.. The polypeptide is Beta-galactosidase Pbg (Clostridium perfringens (strain ATCC 13124 / DSM 756 / JCM 1290 / NCIMB 6125 / NCTC 8237 / Type A)).